The sequence spans 699 residues: Elongation factor G 1 (699 aa).

The tr-type G domain maps to 8–290; sequence ERYRNIGICA…AVIEYLPSPI (283 aa). Residues 17–24, 88–92, and 142–145 each bind GTP; these read AHVDAGKT, DTPGH, and NKMD.

It belongs to the TRAFAC class translation factor GTPase superfamily. Classic translation factor GTPase family. EF-G/EF-2 subfamily.

It localises to the cytoplasm. Its function is as follows. Catalyzes the GTP-dependent ribosomal translocation step during translation elongation. During this step, the ribosome changes from the pre-translocational (PRE) to the post-translocational (POST) state as the newly formed A-site-bound peptidyl-tRNA and P-site-bound deacylated tRNA move to the P and E sites, respectively. Catalyzes the coordinated movement of the two tRNA molecules, the mRNA and conformational changes in the ribosome. The polypeptide is Elongation factor G 1 (Vibrio vulnificus (strain YJ016)).